The following is a 552-amino-acid chain: MSWTGIALFIQLFFGIIIGLYFWNLLKNQRTQKVTIDKESKKEMEQLRKMRAISLSEPLSEKVRPKSFKDIVGQEDGIKALKAALCGPNPQHVIVYGPPGVGKTAAARLVLEEAKKHKQSPFKEQAVFVELDATTARFDERGIADPLIGSVHDPIYQGAGAMGQAGIPQPKQGAVTHAHGGVLFIDEIGELHPIQMNKMLKVLEDRKVFLDSAYYSEENTQIPNHIHDIFQNGLPADFRLIGATTRMPNEIPPAIRSRCLEVFFRELEKDELKTVAKTAADKIEKNISEEGLDLLTSYTRNGREAVNMIQIAAGMAVTENRKDITIEDIEWVIHSSQLTPKHEQKIGVEPQVGIVNGLAVYGPNSGSLLEIEVSVTAAQDKGSINITGIAEEESIGSQSKSIRRKSMAKGSVENVLTVLRTMGMKPSDYDIHINFPGGIPIDGPSAGIAMAAGIFSAIHKIPIDNTVAMTGEISLNGLVKPIGGVIPKIKAAKQSGAKKVIIPYENQQAILKQIDGIEIIAVKTFQEVLDEILVNPPTEQKPFHIEINKESV.

An ATP-binding site is contributed by 97–104 (GPPGVGKT). Positions 349–535 (EPQVGIVNGL…QEVLDEILVN (187 aa)) constitute a Lon proteolytic domain. Catalysis depends on residues serine 445 and lysine 488.

The protein belongs to the peptidase S16 family. As to quaternary structure, homohexamer. Organized in a ring with a central cavity.

The protein resides in the cytoplasm. The enzyme catalyses Hydrolysis of proteins in presence of ATP.. In terms of biological role, ATP-dependent serine protease that mediates the selective degradation of mutant and abnormal proteins as well as certain short-lived regulatory proteins. Required for cellular homeostasis and for survival from DNA damage and developmental changes induced by stress. Degrades polypeptides processively to yield small peptide fragments that are 5 to 10 amino acids long. Binds to DNA in a double-stranded, site-specific manner. The sequence is that of Lon protease 2 (lon2) from Bacillus subtilis (strain 168).